Here is a 288-residue protein sequence, read N- to C-terminus: Syntaxin-1B (288 aa).

A compositionally biased stretch (basic and acidic residues) spans 1–13 (MKDRTQELRSAKD). The tract at residues 1-20 (MKDRTQELRSAKDSDDEEEV) is disordered. At 1–264 (MKDRTQELRS…KYQSKARRKK (264 aa)) the chain is on the cytoplasmic side. Phosphoserine occurs at positions 10 and 14. Positions 29 to 104 (MDEFFEQVEE…IEQSIEQEEG (76 aa)) form a coiled coil. The 63-residue stretch at 191-253 (LNEIETRHNE…ERAVSDTKKA (63 aa)) folds into the t-SNARE coiled-coil homology domain. The helical; Anchor for type IV membrane protein transmembrane segment at 265 to 288 (IMIIICCVVLGVVLASSIGGTLGL) threads the bilayer.

This sequence belongs to the syntaxin family. Interacts with OTOF. Interacts with SYT6 and SYT8; the interaction is Ca(2+)-dependent. In terms of processing, phosphorylated by CK2.

It is found in the membrane. Its subcellular location is the nucleus. It localises to the cytoplasm. The protein resides in the cytoskeleton. The protein localises to the microtubule organizing center. It is found in the centrosome. Its subcellular location is the spindle. Its function is as follows. Potentially involved in docking of synaptic vesicles at presynaptic active zones. May mediate Ca(2+)-regulation of exocytosis acrosomal reaction in sperm. This is Syntaxin-1B (STX1B) from Homo sapiens (Human).